Here is a 372-residue protein sequence, read N- to C-terminus: tRNA-specific 2-thiouridylase MnmA (372 aa).

Residues 11–18 and Met37 contribute to the ATP site; that span reads GMSGGVDS. The tract at residues 97–99 is interaction with target base in tRNA; sequence NPD. Residue Cys102 is the Nucleophile of the active site. Cys102 and Cys199 are oxidised to a cystine. Residue Gly126 participates in ATP binding. Residues 149–151 form an interaction with tRNA region; that stretch reads KDQ. Catalysis depends on Cys199, which acts as the Cysteine persulfide intermediate. The segment at 309–310 is interaction with tRNA; sequence RY.

Belongs to the MnmA/TRMU family.

It is found in the cytoplasm. It carries out the reaction S-sulfanyl-L-cysteinyl-[protein] + uridine(34) in tRNA + AH2 + ATP = 2-thiouridine(34) in tRNA + L-cysteinyl-[protein] + A + AMP + diphosphate + H(+). Its function is as follows. Catalyzes the 2-thiolation of uridine at the wobble position (U34) of tRNA, leading to the formation of s(2)U34. This chain is tRNA-specific 2-thiouridylase MnmA, found in Staphylococcus aureus (strain Mu50 / ATCC 700699).